Here is a 127-residue protein sequence, read N- to C-terminus: MARIAGVDIPRDKRVEIALTYIYGIGLTRSRQILAKTGINPDTRTRDLTDAEVAALRAVVEGEYQVEGDLRRQEAMNIKRLIDIGTYRGRRHRLNLPVRGQRTRTNARTRKGVRKTVAGKKKAPAKK.

The segment at 100–127 (GQRTRTNARTRKGVRKTVAGKKKAPAKK) is disordered. The segment covering 101–127 (QRTRTNARTRKGVRKTVAGKKKAPAKK) has biased composition (basic residues).

Belongs to the universal ribosomal protein uS13 family. Part of the 30S ribosomal subunit. Forms a loose heterodimer with protein S19. Forms two bridges to the 50S subunit in the 70S ribosome.

Its function is as follows. Located at the top of the head of the 30S subunit, it contacts several helices of the 16S rRNA. In the 70S ribosome it contacts the 23S rRNA (bridge B1a) and protein L5 of the 50S subunit (bridge B1b), connecting the 2 subunits; these bridges are implicated in subunit movement. Contacts the tRNAs in the A and P-sites. The polypeptide is Small ribosomal subunit protein uS13 (Synechococcus sp. (strain JA-3-3Ab) (Cyanobacteria bacterium Yellowstone A-Prime)).